The chain runs to 531 residues: T-complex protein 1 subunit zeta-2 (531 aa).

Belongs to the TCP-1 chaperonin family. Component of the chaperonin-containing T-complex (TRiC), a heterooligomeric complex of about 850 to 900 kDa that forms two stacked rings, 12 to 16 nm in diameter.

Its subcellular location is the cytoplasm. Functionally, component of the chaperonin-containing T-complex (TRiC), a molecular chaperone complex that assists the folding of proteins upon ATP hydrolysis. In Bos taurus (Bovine), this protein is T-complex protein 1 subunit zeta-2 (CCT6B).